The following is a 327-amino-acid chain: Methionyl-tRNA formyltransferase (327 aa).

Ser-121 to Pro-124 is a (6S)-5,6,7,8-tetrahydrofolate binding site.

The protein belongs to the Fmt family.

The enzyme catalyses L-methionyl-tRNA(fMet) + (6R)-10-formyltetrahydrofolate = N-formyl-L-methionyl-tRNA(fMet) + (6S)-5,6,7,8-tetrahydrofolate + H(+). Functionally, attaches a formyl group to the free amino group of methionyl-tRNA(fMet). The formyl group appears to play a dual role in the initiator identity of N-formylmethionyl-tRNA by promoting its recognition by IF2 and preventing the misappropriation of this tRNA by the elongation apparatus. This is Methionyl-tRNA formyltransferase from Paraburkholderia phymatum (strain DSM 17167 / CIP 108236 / LMG 21445 / STM815) (Burkholderia phymatum).